A 319-amino-acid chain; its full sequence is Lipoyl synthase (319 aa).

The disordered stretch occupies residues 1-24 (MAVVIDTVGARPRHPEKQANPDTP). Positions 13–24 (RHPEKQANPDTP) are enriched in basic and acidic residues. [4Fe-4S] cluster is bound by residues Cys-58, Cys-63, Cys-69, Cys-84, Cys-88, Cys-91, and Ser-298. The Radical SAM core domain maps to 70–287 (WDKSHATFMI…EEIARAKGFL (218 aa)).

The protein belongs to the radical SAM superfamily. Lipoyl synthase family. It depends on [4Fe-4S] cluster as a cofactor.

It localises to the cytoplasm. It catalyses the reaction [[Fe-S] cluster scaffold protein carrying a second [4Fe-4S](2+) cluster] + N(6)-octanoyl-L-lysyl-[protein] + 2 oxidized [2Fe-2S]-[ferredoxin] + 2 S-adenosyl-L-methionine + 4 H(+) = [[Fe-S] cluster scaffold protein] + N(6)-[(R)-dihydrolipoyl]-L-lysyl-[protein] + 4 Fe(3+) + 2 hydrogen sulfide + 2 5'-deoxyadenosine + 2 L-methionine + 2 reduced [2Fe-2S]-[ferredoxin]. The protein operates within protein modification; protein lipoylation via endogenous pathway; protein N(6)-(lipoyl)lysine from octanoyl-[acyl-carrier-protein]: step 2/2. Catalyzes the radical-mediated insertion of two sulfur atoms into the C-6 and C-8 positions of the octanoyl moiety bound to the lipoyl domains of lipoate-dependent enzymes, thereby converting the octanoylated domains into lipoylated derivatives. This chain is Lipoyl synthase, found in Phenylobacterium zucineum (strain HLK1).